The primary structure comprises 221 residues: MALVVEDIVKNFGEGLSETKVLKGINFEVEQGEFVILNGASGSGKTTLLTILGGLLSQTSGTVLYNDAPLFDKQHRPSDLRLEDIGFIFQSSHLVPYLKVIEQLTLVGQEAGMTKQQSSTRAIQLLKNIGLEDRLNVYPHQLSGGEKQRVAIMRAFMNNPKIILADEPTASLDADRATKVVEMIRQQIKEQQMIGIMITHDRRLFEYADRVIELEDGKITD.

In terms of domain architecture, ABC transporter spans Leu-3–Asp-221. Position 39-46 (Gly-39–Thr-46) interacts with ATP.

It belongs to the ABC transporter superfamily. HrtA family. In terms of assembly, the complex is composed of two ATP-binding proteins (HrtA), two transmembrane proteins (HrtB) and a solute-binding protein.

The protein localises to the cell membrane. Functionally, part of the ABC transporter complex hrt involved in hemin import. Responsible for energy coupling to the transport system. The polypeptide is Putative hemin import ATP-binding protein HrtA (hrtA) (Staphylococcus aureus (strain USA300)).